The chain runs to 289 residues: Urease accessory protein UreD (289 aa).

The protein belongs to the UreD family. As to quaternary structure, ureD, UreF and UreG form a complex that acts as a GTP-hydrolysis-dependent molecular chaperone, activating the urease apoprotein by helping to assemble the nickel containing metallocenter of UreC. The UreE protein probably delivers the nickel.

The protein resides in the cytoplasm. Functionally, required for maturation of urease via the functional incorporation of the urease nickel metallocenter. In Cupriavidus necator (strain ATCC 17699 / DSM 428 / KCTC 22496 / NCIMB 10442 / H16 / Stanier 337) (Ralstonia eutropha), this protein is Urease accessory protein UreD.